The following is an 868-amino-acid chain: Leucine--tRNA ligase (868 aa).

Positions 42–52 match the 'HIGH' region motif; sequence PYPSGKLHMGH. Positions 627–631 match the 'KMSKS' region motif; it reads KMAKS. Lys-630 lines the ATP pocket.

The protein belongs to the class-I aminoacyl-tRNA synthetase family.

The protein localises to the cytoplasm. The enzyme catalyses tRNA(Leu) + L-leucine + ATP = L-leucyl-tRNA(Leu) + AMP + diphosphate. The chain is Leucine--tRNA ligase from Pseudomonas fluorescens (strain Pf0-1).